Reading from the N-terminus, the 159-residue chain is Probable cyclic pyranopterin monophosphate synthase (159 aa).

Substrate is bound by residues 74-76 (MCH) and 110-111 (ME). Residue D125 is part of the active site.

Belongs to the MoaC family. In terms of assembly, homohexamer; trimer of dimers.

The enzyme catalyses (8S)-3',8-cyclo-7,8-dihydroguanosine 5'-triphosphate = cyclic pyranopterin phosphate + diphosphate. Its pathway is cofactor biosynthesis; molybdopterin biosynthesis. Its function is as follows. Catalyzes the conversion of (8S)-3',8-cyclo-7,8-dihydroguanosine 5'-triphosphate to cyclic pyranopterin monophosphate (cPMP). The polypeptide is Probable cyclic pyranopterin monophosphate synthase (Methanococcoides burtonii (strain DSM 6242 / NBRC 107633 / OCM 468 / ACE-M)).